The primary structure comprises 567 residues: Proline--tRNA ligase (567 aa).

The protein belongs to the class-II aminoacyl-tRNA synthetase family. ProS type 1 subfamily. In terms of assembly, homodimer.

It is found in the cytoplasm. The catalysed reaction is tRNA(Pro) + L-proline + ATP = L-prolyl-tRNA(Pro) + AMP + diphosphate. Its function is as follows. Catalyzes the attachment of proline to tRNA(Pro) in a two-step reaction: proline is first activated by ATP to form Pro-AMP and then transferred to the acceptor end of tRNA(Pro). As ProRS can inadvertently accommodate and process non-cognate amino acids such as alanine and cysteine, to avoid such errors it has two additional distinct editing activities against alanine. One activity is designated as 'pretransfer' editing and involves the tRNA(Pro)-independent hydrolysis of activated Ala-AMP. The other activity is designated 'posttransfer' editing and involves deacylation of mischarged Ala-tRNA(Pro). The misacylated Cys-tRNA(Pro) is not edited by ProRS. This Staphylococcus aureus (strain MRSA252) protein is Proline--tRNA ligase.